Consider the following 211-residue polypeptide: Large ribosomal subunit protein uL3 (211 aa).

The disordered stretch occupies residues 135 to 155 (THGNSLSHRAPGSIGQNQSPG). An N5-methylglutamine modification is found at Gln152.

The protein belongs to the universal ribosomal protein uL3 family. As to quaternary structure, part of the 50S ribosomal subunit. Forms a cluster with proteins L14 and L19. In terms of processing, methylated by PrmB.

One of the primary rRNA binding proteins, it binds directly near the 3'-end of the 23S rRNA, where it nucleates assembly of the 50S subunit. In Pseudoalteromonas translucida (strain TAC 125), this protein is Large ribosomal subunit protein uL3.